The primary structure comprises 446 residues: Adenylosuccinate synthetase 1 (446 aa).

GTP contacts are provided by residues 20–26 (GDEGKGK) and 48–50 (GHT). Asp-21 serves as the catalytic Proton acceptor. 2 residues coordinate Mg(2+): Asp-21 and Gly-48. Residues 21–24 (DEGK), 46–49 (NAGH), Thr-137, Arg-151, Gln-232, Thr-247, and Arg-319 contribute to the IMP site. His-49 (proton donor) is an active-site residue. 315-321 (SVTGRPR) is a binding site for substrate. GTP is bound by residues Arg-321, 347–349 (KLD), and 429–431 (STG).

The protein belongs to the adenylosuccinate synthetase family. In terms of assembly, homodimer. Requires Mg(2+) as cofactor.

The protein resides in the cytoplasm. The enzyme catalyses IMP + L-aspartate + GTP = N(6)-(1,2-dicarboxyethyl)-AMP + GDP + phosphate + 2 H(+). It functions in the pathway purine metabolism; AMP biosynthesis via de novo pathway; AMP from IMP: step 1/2. In terms of biological role, plays an important role in the de novo pathway of purine nucleotide biosynthesis. Catalyzes the first committed step in the biosynthesis of AMP from IMP. The sequence is that of Adenylosuccinate synthetase 1 from Cupriavidus pinatubonensis (strain JMP 134 / LMG 1197) (Cupriavidus necator (strain JMP 134)).